The chain runs to 485 residues: NGFI-A-binding protein 1 (485 aa).

Residues 4-82 (ALPRTLGELQ…RDWVTNPGLF (79 aa)) form an NCD1 region. Residues lysine 126, lysine 129, and lysine 143 each participate in a glycyl lysine isopeptide (Lys-Gly) (interchain with G-Cter in SUMO2) cross-link. The tract at residues 160–187 (WQGHHATESEHSLSPADVGSPASPKESS) is disordered. 2 positions are modified to phosphoserine: serine 171 and serine 182. A Glycyl lysine isopeptide (Lys-Gly) (interchain with G-Cter in SUMO2) cross-link involves residue lysine 211. The tract at residues 220 to 309 (LLKNNKKLAK…ARQVSREVTY (90 aa)) is NCD2. The tract at residues 306-337 (EVTYKYTYRTTRLKCGERDELSPKRIKVEDGF) is necessary for nuclear localization. At serine 327 the chain carries Phosphoserine. Residue lysine 332 forms a Glycyl lysine isopeptide (Lys-Gly) (interchain with G-Cter in SUMO1); alternate linkage. A Glycyl lysine isopeptide (Lys-Gly) (interchain with G-Cter in SUMO2); alternate cross-link involves residue lysine 332. Glycyl lysine isopeptide (Lys-Gly) (interchain with G-Cter in SUMO2) cross-links involve residues lysine 354, lysine 368, and lysine 372. A disordered region spans residues 398 to 432 (RQSSGEHSPDGLPSDGSDGQGERPLNLRMPNVQNR). Position 405 is a phosphoserine (serine 405). Glycyl lysine isopeptide (Lys-Gly) (interchain with G-Cter in SUMO2) cross-links involve residues lysine 452, lysine 463, and lysine 475. A Glycyl lysine isopeptide (Lys-Gly) (interchain with G-Cter in SUMO1); alternate cross-link involves residue lysine 478. A Glycyl lysine isopeptide (Lys-Gly) (interchain with G-Cter in SUMO2); alternate cross-link involves residue lysine 478.

It belongs to the NAB family. As to quaternary structure, homomultimers may associate with EGR1 bound to DNA.

It is found in the nucleus. In terms of biological role, acts as a transcriptional repressor for zinc finger transcription factors EGR1 and EGR2. The polypeptide is NGFI-A-binding protein 1 (NAB1) (Mesocricetus auratus (Golden hamster)).